Consider the following 373-residue polypeptide: Ras association domain-containing protein 7 (373 aa).

The region spanning 6–89 is the Ras-associating domain; it reads AAMELKVWVD…VQFVLRRTGP (84 aa). The tract at residues 122-150 is disordered; sequence CEPRKTLTPEPAPSLSRPGPAAPVTPTPG. 2 coiled-coil regions span residues 175–227 and 248–297; these read WEQE…AAEA and QERQ…QFIQ. The interval 300–356 is disordered; the sequence is GAALPPPPRPDRGPPGTQGPLPPAREESLLGAPSESHAGAQPRPRGGPHDAELLEVA.

Interacts with MAP2K7 and GTP-bound NRAS. Post-translationally, polyubiquitinated and degraded by the proteasome upon prolonged stress stimuli.

The protein resides in the cytoplasm. It localises to the cytoskeleton. The protein localises to the microtubule organizing center. It is found in the centrosome. Functionally, negatively regulates stress-induced JNK activation and apoptosis by promoting MAP2K7 phosphorylation and inhibiting its ability to activate JNK. Following prolonged stress, anti-apoptotic effect stops because of degradation of RASSF7 protein via the ubiquitin-proteasome pathway. Required for the activation of AURKB and chromosomal congression during mitosis where it stimulates microtubule polymerization. This chain is Ras association domain-containing protein 7 (RASSF7), found in Homo sapiens (Human).